Consider the following 321-residue polypeptide: N-acetyl-gamma-glutamyl-phosphate reductase (321 aa).

Cys-131 is a catalytic residue.

The protein belongs to the NAGSA dehydrogenase family. Type 1 subfamily.

Its subcellular location is the cytoplasm. The catalysed reaction is N-acetyl-L-glutamate 5-semialdehyde + phosphate + NADP(+) = N-acetyl-L-glutamyl 5-phosphate + NADPH + H(+). It functions in the pathway amino-acid biosynthesis; L-arginine biosynthesis; N(2)-acetyl-L-ornithine from L-glutamate: step 3/4. Its function is as follows. Catalyzes the NADPH-dependent reduction of N-acetyl-5-glutamyl phosphate to yield N-acetyl-L-glutamate 5-semialdehyde. The polypeptide is N-acetyl-gamma-glutamyl-phosphate reductase (Christiangramia forsetii (strain DSM 17595 / CGMCC 1.15422 / KT0803) (Gramella forsetii)).